The sequence spans 572 residues: Protein IQ-DOMAIN 30 (572 aa).

Residues 75 to 96 (SDDEIQVSEVQPTDSQDVASVP) are disordered. The span at 82–92 (SEVQPTDSQDV) shows a compositional bias: polar residues. IQ domains follow at residues 108–136 (QEIA…GIIR) and 137–154 (LQAL…VSTL). The calmodulin-binding stretch occupies residues 159-178 (GIVRLQALARGREIRHSDIG). 2 disordered regions span residues 282–332 (RPKK…MDNP) and 399–572 (IQTH…EWKR). 2 stretches are compositionally biased toward polar residues: residues 291 to 305 (PSSN…QTSS) and 400 to 419 (QTHT…VNQI). Residues 428–455 (AEEKEDVKEERTPKQNHKENSAGKENQK) show a composition bias toward basic and acidic residues. Composition is skewed to polar residues over residues 459-493 (KASS…QATK), 502-514 (QGSS…GTTE), and 522-560 (LPSS…SSRE).

It belongs to the IQD family. As to quaternary structure, binds to multiple calmodulin (CaM) in the presence of Ca(2+) and CaM-like proteins.

It is found in the nucleus envelope. The protein resides in the cytoplasm. It localises to the cytoskeleton. In terms of biological role, may be involved in cooperative interactions with calmodulins or calmodulin-like proteins. Recruits calmodulin proteins to microtubules, thus being a potential scaffold in cellular signaling and trafficking. May associate with nucleic acids and regulate gene expression at the transcriptional or post-transcriptional level. The sequence is that of Protein IQ-DOMAIN 30 from Arabidopsis thaliana (Mouse-ear cress).